Here is a 318-residue protein sequence, read N- to C-terminus: Transaldolase (318 aa).

The active-site Schiff-base intermediate with substrate is the K126.

Belongs to the transaldolase family. Type 1 subfamily. Homodimer.

It is found in the cytoplasm. It catalyses the reaction D-sedoheptulose 7-phosphate + D-glyceraldehyde 3-phosphate = D-erythrose 4-phosphate + beta-D-fructose 6-phosphate. It participates in carbohydrate degradation; pentose phosphate pathway; D-glyceraldehyde 3-phosphate and beta-D-fructose 6-phosphate from D-ribose 5-phosphate and D-xylulose 5-phosphate (non-oxidative stage): step 2/3. In terms of biological role, transaldolase is important for the balance of metabolites in the pentose-phosphate pathway. This chain is Transaldolase, found in Variovorax paradoxus (strain S110).